We begin with the raw amino-acid sequence, 359 residues long: NADH-quinone oxidoreductase subunit H (359 aa).

The next 8 helical transmembrane spans lie at 19–39 (IGWF…FIAL), 94–114 (FLFV…FAVL), 127–147 (VGLF…LAAG), 175–195 (IALL…IILM), 202–222 (FLHW…IYFI), 255–275 (FAVI…IISI), 301–321 (VWGA…QMWL), and 337–357 (CWKV…IWVI).

It belongs to the complex I subunit 1 family. In terms of assembly, NDH-1 is composed of 14 different subunits. Subunits NuoA, H, J, K, L, M, N constitute the membrane sector of the complex.

It is found in the cell inner membrane. The catalysed reaction is a quinone + NADH + 5 H(+)(in) = a quinol + NAD(+) + 4 H(+)(out). NDH-1 shuttles electrons from NADH, via FMN and iron-sulfur (Fe-S) centers, to quinones in the respiratory chain. The immediate electron acceptor for the enzyme in this species is believed to be ubiquinone. Couples the redox reaction to proton translocation (for every two electrons transferred, four hydrogen ions are translocated across the cytoplasmic membrane), and thus conserves the redox energy in a proton gradient. This subunit may bind ubiquinone. The protein is NADH-quinone oxidoreductase subunit H of Chlorobaculum tepidum (strain ATCC 49652 / DSM 12025 / NBRC 103806 / TLS) (Chlorobium tepidum).